We begin with the raw amino-acid sequence, 396 residues long: Elongation factor Tu (396 aa).

The tr-type G domain occupies 10–206; sequence KPHVNVGTIG…ALDSYIPDPE (197 aa). The segment at 19–26 is G1; sequence GHVDHGKT. 19-26 lines the GTP pocket; that stretch reads GHVDHGKT. Thr26 serves as a coordination point for Mg(2+). The interval 60-64 is G2; it reads GITIN. The interval 81-84 is G3; it reads DCPG. Residues 81–85 and 136–139 each bind GTP; these read DCPGH and NKCD. Positions 136 to 139 are G4; sequence NKCD. The tract at residues 174–176 is G5; sequence SAL.

The protein belongs to the TRAFAC class translation factor GTPase superfamily. Classic translation factor GTPase family. EF-Tu/EF-1A subfamily. In terms of assembly, monomer.

Its subcellular location is the cytoplasm. The enzyme catalyses GTP + H2O = GDP + phosphate + H(+). Functionally, GTP hydrolase that promotes the GTP-dependent binding of aminoacyl-tRNA to the A-site of ribosomes during protein biosynthesis. The chain is Elongation factor Tu from Dechloromonas aromatica (strain RCB).